The sequence spans 497 residues: Glutamate--tRNA ligase (497 aa).

The 'HIGH' region motif lies at 13–23 (PSPTGTPHVGM). The short motif at 257–261 (KLSKR) is the 'KMSKS' region element. K260 serves as a coordination point for ATP.

Belongs to the class-I aminoacyl-tRNA synthetase family. Glutamate--tRNA ligase type 1 subfamily. In terms of assembly, monomer.

The protein localises to the cytoplasm. The enzyme catalyses tRNA(Glu) + L-glutamate + ATP = L-glutamyl-tRNA(Glu) + AMP + diphosphate. In terms of biological role, catalyzes the attachment of glutamate to tRNA(Glu) in a two-step reaction: glutamate is first activated by ATP to form Glu-AMP and then transferred to the acceptor end of tRNA(Glu). The protein is Glutamate--tRNA ligase of Corynebacterium diphtheriae (strain ATCC 700971 / NCTC 13129 / Biotype gravis).